Here is a 96-residue protein sequence, read N- to C-terminus: UPF0235 protein CAB243 (96 aa).

This sequence belongs to the UPF0235 family.

In Chlamydia abortus (strain DSM 27085 / S26/3) (Chlamydophila abortus), this protein is UPF0235 protein CAB243.